Reading from the N-terminus, the 395-residue chain is NAD(P)H-quinone oxidoreductase subunit H (395 aa).

The protein belongs to the complex I 49 kDa subunit family. As to quaternary structure, NDH-1 can be composed of about 15 different subunits; different subcomplexes with different compositions have been identified which probably have different functions.

The protein localises to the cellular thylakoid membrane. The catalysed reaction is a plastoquinone + NADH + (n+1) H(+)(in) = a plastoquinol + NAD(+) + n H(+)(out). It catalyses the reaction a plastoquinone + NADPH + (n+1) H(+)(in) = a plastoquinol + NADP(+) + n H(+)(out). NDH-1 shuttles electrons from an unknown electron donor, via FMN and iron-sulfur (Fe-S) centers, to quinones in the respiratory and/or the photosynthetic chain. The immediate electron acceptor for the enzyme in this species is believed to be plastoquinone. Couples the redox reaction to proton translocation, and thus conserves the redox energy in a proton gradient. Cyanobacterial NDH-1 also plays a role in inorganic carbon-concentration. The chain is NAD(P)H-quinone oxidoreductase subunit H from Prochlorococcus marinus (strain MIT 9312).